Reading from the N-terminus, the 332-residue chain is Tetraacyldisaccharide 4'-kinase (332 aa).

Residue 52–59 (TLGGAGKT) coordinates ATP.

Belongs to the LpxK family.

The catalysed reaction is a lipid A disaccharide + ATP = a lipid IVA + ADP + H(+). Its pathway is glycolipid biosynthesis; lipid IV(A) biosynthesis; lipid IV(A) from (3R)-3-hydroxytetradecanoyl-[acyl-carrier-protein] and UDP-N-acetyl-alpha-D-glucosamine: step 6/6. Functionally, transfers the gamma-phosphate of ATP to the 4'-position of a tetraacyldisaccharide 1-phosphate intermediate (termed DS-1-P) to form tetraacyldisaccharide 1,4'-bis-phosphate (lipid IVA). In Methylobacterium sp. (strain 4-46), this protein is Tetraacyldisaccharide 4'-kinase.